The chain runs to 329 residues: UDP-N-acetylenolpyruvoylglucosamine reductase (329 aa).

Positions 28 to 192 constitute an FAD-binding PCMH-type domain; it reads RVGGPADLLC…ARVEVRLHPG (165 aa). Arginine 172 is an active-site residue. Serine 221 serves as the catalytic Proton donor. Glutamate 291 is a catalytic residue. A disordered region spans residues 307 to 329; that stretch reads DGHAAAGGGPGAASGGVRPPEAT. Residues 311–320 show a composition bias toward gly residues; it reads AAGGGPGAAS.

It belongs to the MurB family. FAD is required as a cofactor.

The protein localises to the cytoplasm. The enzyme catalyses UDP-N-acetyl-alpha-D-muramate + NADP(+) = UDP-N-acetyl-3-O-(1-carboxyvinyl)-alpha-D-glucosamine + NADPH + H(+). It participates in cell wall biogenesis; peptidoglycan biosynthesis. Its function is as follows. Cell wall formation. The chain is UDP-N-acetylenolpyruvoylglucosamine reductase from Anaeromyxobacter dehalogenans (strain 2CP-1 / ATCC BAA-258).